A 257-amino-acid polypeptide reads, in one-letter code: Snake venom serine protease KN3 (257 aa).

A signal peptide spans 1–18 (MVLIRVLANLLILQLSYA). A propeptide spanning residues 19 to 24 (QKSSKL) is cleaved from the precursor. The Peptidase S1 domain maps to 25–248 (VVGGDECNIN…HLDWIKSIIA (224 aa)). Intrachain disulfides connect C31-C162, C49-C65, C97-C255, C141-C209, C173-C188, and C199-C224. Catalysis depends on charge relay system residues H64 and D109. N-linked (GlcNAc...) asparagine glycans are attached at residues N120, N121, and N164. S203 acts as the Charge relay system in catalysis.

The protein belongs to the peptidase S1 family. Snake venom subfamily. As to quaternary structure, monomer. As to expression, expressed by the venom gland.

The protein resides in the secreted. Its function is as follows. Snake venom serine protease that may act in the hemostasis system of the prey. This is Snake venom serine protease KN3 from Trimeresurus stejnegeri (Chinese green tree viper).